The primary structure comprises 465 residues: UDP-N-acetylmuramate--L-alanine ligase (465 aa).

112–118 (GTHGKTT) provides a ligand contact to ATP.

It belongs to the MurCDEF family.

The protein resides in the cytoplasm. The enzyme catalyses UDP-N-acetyl-alpha-D-muramate + L-alanine + ATP = UDP-N-acetyl-alpha-D-muramoyl-L-alanine + ADP + phosphate + H(+). Its pathway is cell wall biogenesis; peptidoglycan biosynthesis. Cell wall formation. This is UDP-N-acetylmuramate--L-alanine ligase from Burkholderia multivorans (strain ATCC 17616 / 249).